A 66-amino-acid polypeptide reads, in one-letter code: Large ribosomal subunit protein uL29 (66 aa).

The protein belongs to the universal ribosomal protein uL29 family.

The sequence is that of Large ribosomal subunit protein uL29 from Helicobacter pylori (strain P12).